The primary structure comprises 589 residues: Serine/threonine-protein kinase PknJ (589 aa).

Over 1–342 the chain is Cytoplasmic; sequence MAHELSAGSV…LPRRPRRYRR (342 aa). The Protein kinase domain maps to 14–276; that stretch reads YRIERMLGAG…SAGEFAHAAA (263 aa). ATP contacts are provided by residues 20–28 and Lys43; that span reads LGAGGMGTV. The active-site Proton acceptor is Asp136. The helical transmembrane segment at 343 to 363 threads the bilayer; sequence GVAAVAAVMVVAAAAVTAVTM. Over 364 to 589 the chain is Extracellular; that stretch reads TSHQPRTATP…TNYILAKIPG (226 aa). Over residues 365–387 the composition is skewed to low complexity; the sequence is SHQPRTATPPSAAALSPTSSSTT. Residues 365 to 400 form a disordered region; sequence SHQPRTATPPSAAALSPTSSSTTPPQPPIVTRSRLP.

Belongs to the protein kinase superfamily. Ser/Thr protein kinase family. Homodimer.

Its subcellular location is the cell membrane. The enzyme catalyses L-seryl-[protein] + ATP = O-phospho-L-seryl-[protein] + ADP + H(+). It carries out the reaction L-threonyl-[protein] + ATP = O-phospho-L-threonyl-[protein] + ADP + H(+). The sequence is that of Serine/threonine-protein kinase PknJ (pknJ) from Mycobacterium bovis (strain ATCC BAA-935 / AF2122/97).